The chain runs to 144 residues: MELNNLKPAEGAKHAKRRVGRGIGSGLGKTAGRGHKGQKSRSGGFHKVGFEGGQMPLQRRLPKRGFTSLTKEFVGEVRLGDLEKLPVDDIDLLALKQAGLIGEMMTSAKIIATGELKRKIVVKGLSATKGARAAIEAAGGSFAE.

The disordered stretch occupies residues methionine 1–proline 62. Positions arginine 21–alanine 31 are enriched in gly residues.

It belongs to the universal ribosomal protein uL15 family. In terms of assembly, part of the 50S ribosomal subunit.

Its function is as follows. Binds to the 23S rRNA. This is Large ribosomal subunit protein uL15 from Paraburkholderia phymatum (strain DSM 17167 / CIP 108236 / LMG 21445 / STM815) (Burkholderia phymatum).